The chain runs to 351 residues: Alcohol dehydrogenase 2 (351 aa).

Residues Cys47, His70, Cys101, Cys104, Cys107, Cys115, and Cys157 each contribute to the Zn(2+) site. Residues 181 to 187 (GAGGGLG), Asp205, Lys210, 272 to 274 (VGL), and Arg344 each bind NAD(+).

It belongs to the zinc-containing alcohol dehydrogenase family. In terms of assembly, homotetramer. The cofactor is Zn(2+).

It catalyses the reaction a secondary alcohol + NAD(+) = a ketone + NADH + H(+). Its function is as follows. Versatile oxidoreductase that catalyzes the oxidation and reduction of a broad range of substrates. Preferentially oxidizes secondary alcohols. Has highest activity for racemic 2-octanol. Is also an efficient reductase for selected substrates. Substrate selectivity was found for medium chain lipophilic ketones. Has highest activities for 2-octanone, 2-nonanone and 2-decanone. The enzyme is (S)-selective in the reduction direction and produces exclusively the (S)-enantiomer. The polypeptide is Alcohol dehydrogenase 2 (ADH2) (Yarrowia lipolytica (strain CLIB 122 / E 150) (Yeast)).